Consider the following 435-residue polypeptide: 3-phosphoshikimate 1-carboxyvinyltransferase (435 aa).

3-phosphoshikimate-binding residues include Lys-22, Ser-23, and Arg-27. Lys-22 provides a ligand contact to phosphoenolpyruvate. Residues Gly-95 and Arg-123 each coordinate phosphoenolpyruvate. 3-phosphoshikimate is bound by residues Ser-168, Gln-170, Asp-319, and Lys-346. Residue Gln-170 coordinates phosphoenolpyruvate. The Proton acceptor role is filled by Asp-319. Residues Arg-350 and Arg-393 each coordinate phosphoenolpyruvate.

It belongs to the EPSP synthase family. As to quaternary structure, monomer.

Its subcellular location is the cytoplasm. It carries out the reaction 3-phosphoshikimate + phosphoenolpyruvate = 5-O-(1-carboxyvinyl)-3-phosphoshikimate + phosphate. It functions in the pathway metabolic intermediate biosynthesis; chorismate biosynthesis; chorismate from D-erythrose 4-phosphate and phosphoenolpyruvate: step 6/7. Functionally, catalyzes the transfer of the enolpyruvyl moiety of phosphoenolpyruvate (PEP) to the 5-hydroxyl of shikimate-3-phosphate (S3P) to produce enolpyruvyl shikimate-3-phosphate and inorganic phosphate. This chain is 3-phosphoshikimate 1-carboxyvinyltransferase, found in Chloroflexus aurantiacus (strain ATCC 29364 / DSM 637 / Y-400-fl).